We begin with the raw amino-acid sequence, 191 residues long: Divergent paired-related homeobox (191 aa).

The span at 1–15 shows a compositional bias: basic and acidic residues; that stretch reads MPGSEDLRKGKDQMH. Positions 1–20 are disordered; the sequence is MPGSEDLRKGKDQMHSHRKR. The homeobox DNA-binding region spans 16 to 75; the sequence is SHRKRTMFTKKQLEDLNILFNENPYPNPSLQKEMASKIDIHPTVLQVWFKNHRAKLKKAK.

It belongs to the paired homeobox family.

Its subcellular location is the nucleus. Transcription factor that acts as a repressor. This Homo sapiens (Human) protein is Divergent paired-related homeobox.